Here is a 149-residue protein sequence, read N- to C-terminus: Large ribosomal subunit protein uL15 (149 aa).

The interval 1–58 (MKLHNLRPAKGGEVKARKRVGRGYGSGLGHNAGRGRDGQNSRSGGGVRPGFEGGQMPL) is disordered. Composition is skewed to gly residues over residues 22–32 (RGYGSGLGHNA) and 43–53 (SGGGVRPGFEG).

Belongs to the universal ribosomal protein uL15 family. Part of the 50S ribosomal subunit.

Its function is as follows. Binds to the 23S rRNA. This Finegoldia magna (strain ATCC 29328 / DSM 20472 / WAL 2508) (Peptostreptococcus magnus) protein is Large ribosomal subunit protein uL15.